A 515-amino-acid polypeptide reads, in one-letter code: 2-isopropylmalate synthase (515 aa).

A Pyruvate carboxyltransferase domain is found at 5-268; it reads LIIFDTTLRD…DLGIDTTQIV (264 aa). Mn(2+)-binding residues include D14, H202, H204, and N239. Residues 396 to 515 form a regulatory domain region; sequence KFVSLAQRSE…NADKLNPQRA (120 aa).

It belongs to the alpha-IPM synthase/homocitrate synthase family. LeuA type 1 subfamily. Homodimer. Mn(2+) serves as cofactor.

It localises to the cytoplasm. It catalyses the reaction 3-methyl-2-oxobutanoate + acetyl-CoA + H2O = (2S)-2-isopropylmalate + CoA + H(+). The protein operates within amino-acid biosynthesis; L-leucine biosynthesis; L-leucine from 3-methyl-2-oxobutanoate: step 1/4. In terms of biological role, catalyzes the condensation of the acetyl group of acetyl-CoA with 3-methyl-2-oxobutanoate (2-ketoisovalerate) to form 3-carboxy-3-hydroxy-4-methylpentanoate (2-isopropylmalate). The chain is 2-isopropylmalate synthase from Burkholderia pseudomallei (strain 1106a).